A 348-amino-acid chain; its full sequence is tRNA N6-adenosine threonylcarbamoyltransferase (348 aa).

Fe cation is bound by residues His109 and His113. Substrate is bound by residues 136–140 (TVSGG), Asp169, Gly182, Asp186, and Asn284. A Fe cation-binding site is contributed by Asp312.

It belongs to the KAE1 / TsaD family. The cofactor is Fe(2+).

The protein localises to the cytoplasm. The enzyme catalyses L-threonylcarbamoyladenylate + adenosine(37) in tRNA = N(6)-L-threonylcarbamoyladenosine(37) in tRNA + AMP + H(+). Its function is as follows. Required for the formation of a threonylcarbamoyl group on adenosine at position 37 (t(6)A37) in tRNAs that read codons beginning with adenine. Is involved in the transfer of the threonylcarbamoyl moiety of threonylcarbamoyl-AMP (TC-AMP) to the N6 group of A37, together with TsaE and TsaB. TsaD likely plays a direct catalytic role in this reaction. This Chlorobium luteolum (strain DSM 273 / BCRC 81028 / 2530) (Pelodictyon luteolum) protein is tRNA N6-adenosine threonylcarbamoyltransferase.